The following is a 464-amino-acid chain: Fumarate hydratase class II (464 aa).

Residues 96–98, 127–130, 137–139, and Thr185 each bind substrate; these read SGT, HPND, and SSN. His186 functions as the Proton donor/acceptor in the catalytic mechanism. Ser316 is an active-site residue. Residues Ser317 and 322–324 each bind substrate; that span reads KVN.

Belongs to the class-II fumarase/aspartase family. Fumarase subfamily. In terms of assembly, homotetramer.

The protein localises to the cytoplasm. The catalysed reaction is (S)-malate = fumarate + H2O. It functions in the pathway carbohydrate metabolism; tricarboxylic acid cycle; (S)-malate from fumarate: step 1/1. Its function is as follows. Involved in the TCA cycle. Catalyzes the stereospecific interconversion of fumarate to L-malate. The chain is Fumarate hydratase class II from Pseudomonas putida (strain ATCC 47054 / DSM 6125 / CFBP 8728 / NCIMB 11950 / KT2440).